The sequence spans 527 residues: Peptide chain release factor 3 (527 aa).

The region spanning 9–277 is the tr-type G domain; that stretch reads AKRRTFAIIS…AVVDWAPRPL (269 aa). Residues 18 to 25, 86 to 90, and 140 to 143 contribute to the GTP site; these read SHPDAGKT, DTPGH, and NKLD.

This sequence belongs to the TRAFAC class translation factor GTPase superfamily. Classic translation factor GTPase family. PrfC subfamily.

It is found in the cytoplasm. Its function is as follows. Increases the formation of ribosomal termination complexes and stimulates activities of RF-1 and RF-2. It binds guanine nucleotides and has strong preference for UGA stop codons. It may interact directly with the ribosome. The stimulation of RF-1 and RF-2 is significantly reduced by GTP and GDP, but not by GMP. The polypeptide is Peptide chain release factor 3 (Pseudomonas putida (strain W619)).